A 179-amino-acid chain; its full sequence is Alpha-tubulin N-acetyltransferase (179 aa).

Residues 1–175 enclose the N-acetyltransferase domain; that stretch reads MRVEVVRAPG…NRFVVFDAYF (175 aa). Residues 109 to 122 and 145 to 154 contribute to the acetyl-CoA site; these read FYVD…GVGL and SPKLFAFLKK.

This sequence belongs to the acetyltransferase ATAT1 family.

It catalyses the reaction L-lysyl-[alpha-tubulin] + acetyl-CoA = N(6)-acetyl-L-lysyl-[alpha-tubulin] + CoA + H(+). Specifically acetylates 'Lys-40' in alpha-tubulin on the lumenal side of microtubules. Promotes microtubule destabilization and accelerates microtubule dynamics; this activity may be independent of acetylation activity. Acetylates alpha-tubulin with a slow enzymatic rate, due to a catalytic site that is not optimized for acetyl transfer. Enters the microtubule through each end and diffuses quickly throughout the lumen of microtubules. Acetylates only long/old microtubules because of its slow acetylation rate since it does not have time to act on dynamically unstable microtubules before the enzyme is released. This Phytophthora infestans (strain T30-4) (Potato late blight agent) protein is Alpha-tubulin N-acetyltransferase.